Here is a 1294-residue protein sequence, read N- to C-terminus: RNA replication protein (1294 aa).

An Alphavirus-like MT domain is found at 59–224 (NPFAVKVHSH…SHEFKQLEWL (166 aa)). Residues 541-698 (LKKQSKDWLA…TYQPFCRYYL (158 aa)) form the (+)RNA virus helicase ATP-binding domain. 570–577 (GAGGSGKS) contributes to the ATP binding site. One can recognise a (+)RNA virus helicase C-terminal domain in the interval 699-832 (NITHRNKPDL…CVREERMNEI (134 aa)). The RdRp catalytic domain occupies 1071-1178 (RTCFSNDFTA…DYVASVKPSF (108 aa)).

This sequence belongs to the potexvirus/carlavirus RNA replication protein family.

The catalysed reaction is RNA(n) + a ribonucleoside 5'-triphosphate = RNA(n+1) + diphosphate. The enzyme catalyses ATP + H2O = ADP + phosphate + H(+). Functionally, RNA replication. The central part of this protein possibly functions as an ATP-binding helicase. This is RNA replication protein from Trifolium (WCMV).